Reading from the N-terminus, the 580-residue chain is Arginine--tRNA ligase (580 aa).

The short motif at 131 to 141 is the 'HIGH' region element; the sequence is ANPTGPMHVGH.

This sequence belongs to the class-I aminoacyl-tRNA synthetase family. Monomer.

It localises to the cytoplasm. The catalysed reaction is tRNA(Arg) + L-arginine + ATP = L-arginyl-tRNA(Arg) + AMP + diphosphate. The polypeptide is Arginine--tRNA ligase (Cereibacter sphaeroides (strain ATCC 17023 / DSM 158 / JCM 6121 / CCUG 31486 / LMG 2827 / NBRC 12203 / NCIMB 8253 / ATH 2.4.1.) (Rhodobacter sphaeroides)).